A 434-amino-acid polypeptide reads, in one-letter code: tRNA modification GTPase MnmE (434 aa).

(6S)-5-formyl-5,6,7,8-tetrahydrofolate contacts are provided by Arg-20, Glu-79, and Val-119. A TrmE-type G domain is found at Gly-219–Lys-361. GTP contacts are provided by residues Asn-229 to Thr-234, Ala-248 to Thr-254, and Asp-273 to Gly-276. Mg(2+) contacts are provided by Ser-233 and Thr-254. Lys-434 is a (6S)-5-formyl-5,6,7,8-tetrahydrofolate binding site.

Belongs to the TRAFAC class TrmE-Era-EngA-EngB-Septin-like GTPase superfamily. TrmE GTPase family. As to quaternary structure, homodimer. Heterotetramer of two MnmE and two MnmG subunits. The cofactor is K(+).

The protein resides in the cytoplasm. In terms of biological role, exhibits a very high intrinsic GTPase hydrolysis rate. Involved in the addition of a carboxymethylaminomethyl (cmnm) group at the wobble position (U34) of certain tRNAs, forming tRNA-cmnm(5)s(2)U34. In Zymomonas mobilis subsp. mobilis (strain ATCC 31821 / ZM4 / CP4), this protein is tRNA modification GTPase MnmE.